The sequence spans 690 residues: Protein-glucosylgalactosylhydroxylysine glucosidase (690 aa).

Substrate is bound at residue 299-300 (WD). The active-site Proton donor is the glutamate 429. 497–498 (KQ) is a binding site for substrate.

It belongs to the glycosyl hydrolase 65 family.

The catalysed reaction is (5R)-5-O-[alpha-D-glucosyl-(1-&gt;2)-beta-D-galactosyl]-5-hydroxy-L-lysyl-[collagen] + H2O = (5R)-5-O-(beta-D-galactosyl)-5-hydroxy-L-lysyl-[collagen] + D-glucose. Its function is as follows. Catalyzes the hydrolysis of glucose from the disaccharide unit linked to hydroxylysine residues of collagen and collagen-like proteins. This Mus musculus (Mouse) protein is Protein-glucosylgalactosylhydroxylysine glucosidase.